The following is a 186-amino-acid chain: Protein GrpE (186 aa).

The span at 1–15 (MADEQQTLDQQTPEQ) shows a compositional bias: polar residues. Positions 1–20 (MADEQQTLDQQTPEQPTGAA) are disordered.

The protein belongs to the GrpE family. As to quaternary structure, homodimer.

The protein localises to the cytoplasm. Functionally, participates actively in the response to hyperosmotic and heat shock by preventing the aggregation of stress-denatured proteins, in association with DnaK and GrpE. It is the nucleotide exchange factor for DnaK and may function as a thermosensor. Unfolded proteins bind initially to DnaJ; upon interaction with the DnaJ-bound protein, DnaK hydrolyzes its bound ATP, resulting in the formation of a stable complex. GrpE releases ADP from DnaK; ATP binding to DnaK triggers the release of the substrate protein, thus completing the reaction cycle. Several rounds of ATP-dependent interactions between DnaJ, DnaK and GrpE are required for fully efficient folding. The polypeptide is Protein GrpE (Pseudomonas aeruginosa (strain UCBPP-PA14)).